The chain runs to 213 residues: Octanoyltransferase (213 aa).

In terms of domain architecture, BPL/LPL catalytic spans A27–A209. Substrate contacts are provided by residues R66–H73, A140–G142, and G153–A155. Residue C171 is the Acyl-thioester intermediate of the active site.

This sequence belongs to the LipB family.

It is found in the cytoplasm. The enzyme catalyses octanoyl-[ACP] + L-lysyl-[protein] = N(6)-octanoyl-L-lysyl-[protein] + holo-[ACP] + H(+). It participates in protein modification; protein lipoylation via endogenous pathway; protein N(6)-(lipoyl)lysine from octanoyl-[acyl-carrier-protein]: step 1/2. Catalyzes the transfer of endogenously produced octanoic acid from octanoyl-acyl-carrier-protein onto the lipoyl domains of lipoate-dependent enzymes. Lipoyl-ACP can also act as a substrate although octanoyl-ACP is likely to be the physiological substrate. The polypeptide is Octanoyltransferase (Bordetella petrii (strain ATCC BAA-461 / DSM 12804 / CCUG 43448)).